A 341-amino-acid chain; its full sequence is Putative ubiquitin-like-specific protease 1B (341 aa).

Active-site residues include His231, Asp248, and Cys300.

The protein belongs to the peptidase C48 family.

Protease that catalyzes two essential functions in the SUMO pathway: processing of full-length SUMOs to their mature forms and deconjugation of SUMO from targeted proteins. The chain is Putative ubiquitin-like-specific protease 1B (ULP1B) from Arabidopsis thaliana (Mouse-ear cress).